A 293-amino-acid chain; its full sequence is MSLFDWFADRRKGQYVGNVKQEPEEGDGLWSKCPECGLVVYLKDLRLNASVCAGCGYHHRIDSSERLALIADPESFQPLNEHLAPIDPLGFKDRRAYADRLRESQSATGLNDGVVTGLCRVDGIGMGLAVMDFRFMGGSMGSVVGEKITRLVEECTKRKLPLLIVCASGGARMQEGMLSLMQMAKISGALERHREAELLYLPLLTHPTTGGVTASFAMLGDLILAEPKALIGFAGRRVIEQTLREKLPDNFQTAEYLQDHGFVDTIIPRTQFRSTLASLLRLHGSKSLELTNA.

The CoA carboxyltransferase N-terminal domain maps to 29–293; that stretch reads LWSKCPECGL…GSKSLELTNA (265 aa). The Zn(2+) site is built by cysteine 33, cysteine 36, cysteine 52, and cysteine 55. The C4-type zinc finger occupies 33–55; sequence CPECGLVVYLKDLRLNASVCAGC.

Belongs to the AccD/PCCB family. In terms of assembly, acetyl-CoA carboxylase is a heterohexamer composed of biotin carboxyl carrier protein (AccB), biotin carboxylase (AccC) and two subunits each of ACCase subunit alpha (AccA) and ACCase subunit beta (AccD). Zn(2+) serves as cofactor.

The protein localises to the cytoplasm. The enzyme catalyses N(6)-carboxybiotinyl-L-lysyl-[protein] + acetyl-CoA = N(6)-biotinyl-L-lysyl-[protein] + malonyl-CoA. Its pathway is lipid metabolism; malonyl-CoA biosynthesis; malonyl-CoA from acetyl-CoA: step 1/1. In terms of biological role, component of the acetyl coenzyme A carboxylase (ACC) complex. Biotin carboxylase (BC) catalyzes the carboxylation of biotin on its carrier protein (BCCP) and then the CO(2) group is transferred by the transcarboxylase to acetyl-CoA to form malonyl-CoA. The chain is Acetyl-coenzyme A carboxylase carboxyl transferase subunit beta from Synechococcus sp. (strain CC9902).